A 200-amino-acid chain; its full sequence is Holliday junction branch migration complex subunit RuvA (200 aa).

A domain I region spans residues 1–63 (MYAYVKGKLT…EDAQLLYGFS (63 aa)). The segment at 64–142 (SEEEKDMFLS…ITEEDSDSLL (79 aa)) is domain II. The segment at 143–149 (QVDATST) is flexible linker. Residues 150-200 (VQDQFVQEAMLALEALGYSKRELAKVEKTLNKNKYDSVDEAVKAGLQLVVS) form a domain III region.

Belongs to the RuvA family. As to quaternary structure, homotetramer. Forms an RuvA(8)-RuvB(12)-Holliday junction (HJ) complex. HJ DNA is sandwiched between 2 RuvA tetramers; dsDNA enters through RuvA and exits via RuvB. An RuvB hexamer assembles on each DNA strand where it exits the tetramer. Each RuvB hexamer is contacted by two RuvA subunits (via domain III) on 2 adjacent RuvB subunits; this complex drives branch migration. In the full resolvosome a probable DNA-RuvA(4)-RuvB(12)-RuvC(2) complex forms which resolves the HJ.

It is found in the cytoplasm. Functionally, the RuvA-RuvB-RuvC complex processes Holliday junction (HJ) DNA during genetic recombination and DNA repair, while the RuvA-RuvB complex plays an important role in the rescue of blocked DNA replication forks via replication fork reversal (RFR). RuvA specifically binds to HJ cruciform DNA, conferring on it an open structure. The RuvB hexamer acts as an ATP-dependent pump, pulling dsDNA into and through the RuvAB complex. HJ branch migration allows RuvC to scan DNA until it finds its consensus sequence, where it cleaves and resolves the cruciform DNA. This chain is Holliday junction branch migration complex subunit RuvA, found in Staphylococcus aureus (strain Mu3 / ATCC 700698).